Here is a 154-residue protein sequence, read N- to C-terminus: Large ribosomal subunit protein uL23 (154 aa).

It belongs to the universal ribosomal protein uL23 family.

In terms of biological role, this protein binds to a specific region on the 26S rRNA. This Daucus carota (Wild carrot) protein is Large ribosomal subunit protein uL23 (RPL23A).